The following is a 505-amino-acid chain: ATP synthase subunit alpha (505 aa).

172–179 (GDRQIGKT) is an ATP binding site.

It belongs to the ATPase alpha/beta chains family. F-type ATPases have 2 components, CF(1) - the catalytic core - and CF(0) - the membrane proton channel. CF(1) has five subunits: alpha(3), beta(3), gamma(1), delta(1), epsilon(1). CF(0) has three main subunits: a(1), b(2) and c(9-12). The alpha and beta chains form an alternating ring which encloses part of the gamma chain. CF(1) is attached to CF(0) by a central stalk formed by the gamma and epsilon chains, while a peripheral stalk is formed by the delta and b chains.

The protein resides in the cell inner membrane. It carries out the reaction ATP + H2O + 4 H(+)(in) = ADP + phosphate + 5 H(+)(out). Its function is as follows. Produces ATP from ADP in the presence of a proton gradient across the membrane. The alpha chain is a regulatory subunit. In Syntrophobacter fumaroxidans (strain DSM 10017 / MPOB), this protein is ATP synthase subunit alpha.